The chain runs to 157 residues: MADEALFQFLHSEIIQYVNSAETGESENGRCVSKLENMGFRVGQGLIERFTKDTPRFKDELDVMKFICKDFWTSVFKKQIDNLRTNHQGIYVLQDNKFRLLTQLSAGKQYLEHAPKFLAFTCGLVRGALSNIGVKSIVTAEVSVMPACKFQVMIQKM.

This sequence belongs to the TRAPP small subunits family. BET3 subfamily. Homodimer. Part of a TRAPP complex.

It localises to the golgi apparatus. The protein localises to the cis-Golgi network. It is found in the endoplasmic reticulum. Its function is as follows. Component of a transport protein particle (TRAPP) complex that may function in specific stages of inter-organelle traffic. Specifically involved in the early development of neural circuitry, likely by controlling the frequency and amplitude of intracellular calcium transients implicated in the regulation of neuron differentiation and survival. In Danio rerio (Zebrafish), this protein is Trafficking protein particle complex subunit 6b.